The following is a 715-amino-acid chain: Methylmalonyl-CoA mutase large subunit (715 aa).

(R)-methylmalonyl-CoA is bound by residues Y70, M73, R77, T80, R82, Y84, and S109. 2 residues coordinate cob(II)alamin: F112 and A134. (R)-methylmalonyl-CoA contacts are provided by T190 and Q192. Residues V201 and R202 each coordinate cob(II)alamin. Residues R202, H239, R278, and S280 each contribute to the (R)-methylmalonyl-CoA site. Cob(II)alamin is bound by residues G328, E365, A368, G599, H600, D601, R602, S645, L647, G676, and T699. Residues 587 to 715 form the B12-binding domain; it reads QPRIMIAKMG…AKVLEILLEE (129 aa).

Belongs to the methylmalonyl-CoA mutase family. Heterodimer of an alpha and a beta chain. It depends on adenosylcob(III)alamin as a cofactor.

The enzyme catalyses (R)-methylmalonyl-CoA = succinyl-CoA. Catalyzes the isomerization of succinyl-CoA to methylmalonyl-CoA during synthesis of propionate from tricarboxylic acid-cycle intermediates. This Porphyromonas gingivalis (strain ATCC BAA-308 / W83) protein is Methylmalonyl-CoA mutase large subunit (mutB).